The primary structure comprises 180 residues: Thiol:disulfide interchange protein TxlA homolog (180 aa).

Residues 10–26 form a helical membrane-spanning segment; sequence LLAVVAIALSAAVYLGF. The Thioredoxin domain occupies 34–143; sequence SLEAQAQRAI…LEQNITALVA (110 aa). C64 and C67 are joined by a disulfide.

The protein belongs to the thioredoxin family.

It is found in the cell membrane. Required for disulfide bond formation in some proteins. Acts by transferring its disulfide bond to other proteins and is reduced in the process. The protein is Thiol:disulfide interchange protein TxlA homolog (txlA) of Synechocystis sp. (strain ATCC 27184 / PCC 6803 / Kazusa).